The following is a 430-amino-acid chain: Histidine--tRNA ligase (430 aa).

This sequence belongs to the class-II aminoacyl-tRNA synthetase family. Homodimer.

Its subcellular location is the cytoplasm. It carries out the reaction tRNA(His) + L-histidine + ATP = L-histidyl-tRNA(His) + AMP + diphosphate + H(+). This is Histidine--tRNA ligase from Anaplasma marginale (strain St. Maries).